The primary structure comprises 239 residues: Demethylmenaquinone methyltransferase (239 aa).

Residues Thr-68, Asp-86, and 111 to 112 (NG) contribute to the S-adenosyl-L-methionine site.

This sequence belongs to the class I-like SAM-binding methyltransferase superfamily. MenG/UbiE family.

It catalyses the reaction a 2-demethylmenaquinol + S-adenosyl-L-methionine = a menaquinol + S-adenosyl-L-homocysteine + H(+). It participates in quinol/quinone metabolism; menaquinone biosynthesis; menaquinol from 1,4-dihydroxy-2-naphthoate: step 2/2. Functionally, methyltransferase required for the conversion of demethylmenaquinol (DMKH2) to menaquinol (MKH2). The protein is Demethylmenaquinone methyltransferase of Tropheryma whipplei (strain TW08/27) (Whipple's bacillus).